The primary structure comprises 277 residues: Inner kinetochore subunit sim4 (277 aa).

Residues Asn-96–Glu-138 adopt a coiled-coil conformation.

The protein belongs to the CENP-K/MCM22 family. As to quaternary structure, component of the inner kinetochore constitutive centromere-associated network (CCAN) (also known as central kinetochore Sim4 complex in fission yeast), which is composed of at least cnl2, cnp3, cnp20, fta1, fta2, fta3, fta4, fta6, fta7, mal2, mhf1, mhf2, mis6, mis15, mis17, sim4 and wip1. Interacts with mis6 and dad1.

Its subcellular location is the nucleus. The protein localises to the chromosome. It localises to the centromere. Its function is as follows. Component of the kinetochore, a multiprotein complex that assembles on centromeric DNA and attaches chromosomes to spindle microtubules, mediating chromosome segregation and sister chromatid segregation during meiosis and mitosis. Component of the inner kinetochore constitutive centromere-associated network (CCAN), which serves as a structural platform for outer kinetochore assembly. The sequence is that of Inner kinetochore subunit sim4 (sim4) from Schizosaccharomyces pombe (strain 972 / ATCC 24843) (Fission yeast).